The primary structure comprises 137 residues: MEKKTIVLGVIGSDCHAVGNKILDHSFTAAGFNVVNIGVLSPQEDFINAAIETKADAILVSSLYGQGEIDCKGLRQKCDEAGLEGILLYVGGNIVVGKQHWPDVEKRFKDMGYDRVYAPGTPPEVGIADLKEDLNIK.

Residues 3–137 form the B12-binding domain; it reads KKTIVLGVIG…ADLKEDLNIK (135 aa). Adenosylcob(III)alamin contacts are provided by residues 13–17, His16, 61–63, and 93–97; these read SDCHA, SSL, and NIVVG.

Belongs to the methylaspartate mutase GlmS subunit family. In terms of assembly, heterotetramer composed of 2 epsilon subunits (GlmE) and 2 sigma subunits (GlmS). GlmE exists as a homodimer and GlmS as a monomer. Requires adenosylcob(III)alamin as cofactor.

It carries out the reaction (2S,3S)-3-methyl-L-aspartate = L-glutamate. Its pathway is amino-acid degradation; L-glutamate degradation via mesaconate pathway; acetate and pyruvate from L-glutamate: step 1/4. Its function is as follows. Catalyzes the carbon skeleton rearrangement of L-glutamate to L-threo-3-methylaspartate ((2S,3S)-3-methylaspartate). In Clostridium tetani (strain Massachusetts / E88), this protein is Glutamate mutase sigma subunit.